Consider the following 718-residue polypeptide: Neutral ceramidase B (718 aa).

An N-terminal signal peptide occupies residues 1–20 (MINSFKKLIILISLVIILLS). 2 N-linked (GlcNAc...) asparagine glycosylation sites follow: asparagine 224 and asparagine 252. The active-site Nucleophile is the serine 298. N-linked (GlcNAc...) asparagine glycosylation is found at asparagine 358, asparagine 378, asparagine 391, asparagine 421, asparagine 422, asparagine 577, asparagine 610, and asparagine 614.

It belongs to the neutral ceramidase family.

Its subcellular location is the secreted. It carries out the reaction an N-acylsphing-4-enine + H2O = sphing-4-enine + a fatty acid. Hydrolyzes the sphingolipid ceramide into sphingosine and free fatty acid. This Dictyostelium discoideum (Social amoeba) protein is Neutral ceramidase B (dcd2B).